The sequence spans 584 residues: DNA mismatch repair protein MutL (584 aa).

It belongs to the DNA mismatch repair MutL/HexB family.

Functionally, this protein is involved in the repair of mismatches in DNA. It is required for dam-dependent methyl-directed DNA mismatch repair. May act as a 'molecular matchmaker', a protein that promotes the formation of a stable complex between two or more DNA-binding proteins in an ATP-dependent manner without itself being part of a final effector complex. In Buchnera aphidicola subsp. Acyrthosiphon pisum (strain Tuc7), this protein is DNA mismatch repair protein MutL.